A 715-amino-acid chain; its full sequence is Polyribonucleotide nucleotidyltransferase (715 aa).

Asp-498 and Asp-504 together coordinate Mg(2+). The region spanning 565–625 (PKVCMMQIKP…ETVKKTVAFI (61 aa)) is the KH domain. The S1 motif domain occupies 635-709 (GTCYQASILR…RIDFLLLPKK (75 aa)).

This sequence belongs to the polyribonucleotide nucleotidyltransferase family. Requires Mg(2+) as cofactor.

The protein localises to the cytoplasm. It carries out the reaction RNA(n+1) + phosphate = RNA(n) + a ribonucleoside 5'-diphosphate. In terms of biological role, involved in mRNA degradation. Catalyzes the phosphorolysis of single-stranded polyribonucleotides processively in the 3'- to 5'-direction. The sequence is that of Polyribonucleotide nucleotidyltransferase from Aster yellows witches'-broom phytoplasma (strain AYWB).